Consider the following 308-residue polypeptide: MSEITAAMVKELREKTGAGMMDCKKALAETGGDMEAAIDWLRAKGIAKADKKSGRTAAEGLIGVSSQGTKAVVVEVNSETDFVARNDAFQDLVRGIAKVAVSTNGSVDAVAAATYPASGKSVSDTIKDAIATIGENMNLRRSVALSVEDGVVATYIHNAVSDGLGKLGVLVALKSTGDKEALNAIGRQVAMHIAATAPLAIRPEEVDAAVAERERNVFIEQSRASGKPDNIIEKMVDGRMRKFFEEVALLSQAFVINPDLTVAAAVKEAEKAVGAPIEVAGMARLLLGEGVEKEETDFAAEVAAAVKG.

The segment at 80–83 (TDFV) is involved in Mg(2+) ion dislocation from EF-Tu.

The protein belongs to the EF-Ts family.

The protein localises to the cytoplasm. Associates with the EF-Tu.GDP complex and induces the exchange of GDP to GTP. It remains bound to the aminoacyl-tRNA.EF-Tu.GTP complex up to the GTP hydrolysis stage on the ribosome. The protein is Elongation factor Ts of Rhizobium leguminosarum bv. trifolii (strain WSM2304).